The following is an 83-amino-acid chain: U3-theraphotoxin-Cg1a (83 aa).

An N-terminal signal peptide occupies residues 1 to 23; the sequence is MRTFTLIAILTCAVLVIFHAAAA. The propeptide occupies 24–44; it reads EELEAQDVIETEALATLDEER. 3 disulfide bridges follow: Cys-48/Cys-61, Cys-52/Cys-75, and Cys-69/Cys-80.

Belongs to the neurotoxin 12 (Hwtx-2) family. 03 (juruin) subfamily. Contains 3 disulfide bonds. Two different connectivities are observed in similar proteins (C1-C3, C2-C5, C4-C6 or C1-C4, C2-C5, C3-C6). In terms of tissue distribution, expressed by the venom gland.

The protein localises to the secreted. Functionally, probable ion channel inhibitor. This is U3-theraphotoxin-Cg1a from Chilobrachys guangxiensis (Chinese earth tiger tarantula).